A 98-amino-acid polypeptide reads, in one-letter code: DNA-binding protein Fis (98 aa).

The segment at residues 74–93 is a DNA-binding region (H-T-H motif); the sequence is QTRAATMMGINRGTLRKKLK.

It belongs to the transcriptional regulatory Fis family. Homodimer.

In terms of biological role, activates ribosomal RNA transcription. Plays a direct role in upstream activation of rRNA promoters. In Vibrio parahaemolyticus serotype O3:K6 (strain RIMD 2210633), this protein is DNA-binding protein Fis.